We begin with the raw amino-acid sequence, 266 residues long: uncharacterized protein (266 aa).

Residues 12–28 (ILAAGLAIGCAGGYYAY) traverse the membrane as a helical segment. Positions 40–140 (EIYAPFTVNK…RGPFKTTKLD (101 aa)) constitute an FAD-binding FR-type domain.

It belongs to the flavoprotein pyridine nucleotide cytochrome reductase family. The cofactor is FAD.

It localises to the mitochondrion outer membrane. This is an uncharacterized protein from Schizosaccharomyces pombe (strain 972 / ATCC 24843) (Fission yeast).